Here is a 281-residue protein sequence, read N- to C-terminus: NADPH-dependent 7-cyano-7-deazaguanine reductase (281 aa).

88-90 (VES) is a binding site for substrate. Residue 90 to 91 (SK) participates in NADPH binding. Cys189 functions as the Thioimide intermediate in the catalytic mechanism. Asp196 acts as the Proton donor in catalysis. 228 to 229 (HE) provides a ligand contact to substrate. 257–258 (RG) is an NADPH binding site.

This sequence belongs to the GTP cyclohydrolase I family. QueF type 2 subfamily. In terms of assembly, homodimer.

It localises to the cytoplasm. The catalysed reaction is 7-aminomethyl-7-carbaguanine + 2 NADP(+) = 7-cyano-7-deazaguanine + 2 NADPH + 3 H(+). The protein operates within tRNA modification; tRNA-queuosine biosynthesis. In terms of biological role, catalyzes the NADPH-dependent reduction of 7-cyano-7-deazaguanine (preQ0) to 7-aminomethyl-7-deazaguanine (preQ1). This is NADPH-dependent 7-cyano-7-deazaguanine reductase from Klebsiella pneumoniae (strain 342).